The sequence spans 104 residues: Met repressor (104 aa).

The protein belongs to the MetJ family. In terms of assembly, homodimer.

The protein localises to the cytoplasm. Its function is as follows. This regulatory protein, when combined with SAM (S-adenosylmethionine) represses the expression of the methionine regulon and of enzymes involved in SAM synthesis. The protein is Met repressor of Shewanella oneidensis (strain ATCC 700550 / JCM 31522 / CIP 106686 / LMG 19005 / NCIMB 14063 / MR-1).